We begin with the raw amino-acid sequence, 618 residues long: Cell pattern formation-associated protein STU1 (618 aa).

Polar residues predominate over residues 13–28 (MSAGPTQQPPTVTSYN). The disordered stretch occupies residues 13 to 105 (MSAGPTQQPP…FDTSGQIAPP (93 aa)). The segment covering 48–59 (YGGYPYTNGMPS) has biased composition (low complexity). Positions 91-101 (NQYSGFDTSGQ) are enriched in polar residues. Residues 110–216 (RVTATLWEDE…HNISALLYHP (107 aa)) enclose the HTH APSES-type domain. Positions 144–165 (GTKLLNVAGMTRGRRDGILKSE) form a DNA-binding region, H-T-H motif. 2 disordered regions span residues 229 to 355 (AERR…YDGS) and 390 to 618 (SEMG…SRRR). Polar residues-rich tracts occupy residues 256–266 (MSQNGSQSLSG), 284–298 (TSAS…SDSF), 305–326 (AMSN…TRSM), and 336–355 (GSTL…YDGS). Residues 438 to 451 (DHEHDPEYTHDSRT) show a composition bias toward basic and acidic residues. Polar residues predominate over residues 452–476 (YDNSQSQYNYTAPPVSSISSEQAHV). Residues 494–512 (PRSAAAPQAYYQQAYSTSP) are compositionally biased toward low complexity. A compositionally biased stretch (polar residues) spans 513 to 563 (RSATHQSTSNLYNVMSNDRGSTTNGSANGDVYSQSTDLSNGYATPVTNGNA). The segment at 566 to 588 (KRGRDDDDDRSSSSGQMDLKRRK) is nuclear localization domain.

It belongs to the EFG1/PHD1/stuA family.

The protein localises to the nucleus. Functionally, transcription factor that regulates asexual reproduction. Binds the StuA-response elements (StRE) with the consensus sequence 5'-(A/T)CGCG(T/A)N(A/C)-3' at the promoters of target genes. Required for appressorium-mediated infection of rice leaves due to its involvement in the mobilization of lipids and glycogen. This Pyricularia oryzae (strain 70-15 / ATCC MYA-4617 / FGSC 8958) (Rice blast fungus) protein is Cell pattern formation-associated protein STU1.